We begin with the raw amino-acid sequence, 224 residues long: Ribonuclease HII (224 aa).

The region spanning 36–224 is the RNase H type-2 domain; sequence RGVAGVDEVG…RRSFLRRFLG (189 aa). Positions 42, 43, and 138 each coordinate a divalent metal cation.

Belongs to the RNase HII family. Requires Mn(2+) as cofactor. It depends on Mg(2+) as a cofactor.

It is found in the cytoplasm. The enzyme catalyses Endonucleolytic cleavage to 5'-phosphomonoester.. Endonuclease that specifically degrades the RNA of RNA-DNA hybrids. This chain is Ribonuclease HII, found in Parasynechococcus marenigrum (strain WH8102).